The sequence spans 406 residues: Argininosuccinate synthase (406 aa).

ATP-binding positions include 11-19 and A38; that span reads AYSGGLDTS. Positions 91 and 96 each coordinate L-citrulline. An ATP-binding site is contributed by G121. Positions 123, 127, and 128 each coordinate L-aspartate. L-citrulline is bound at residue N127. L-citrulline-binding residues include R131, S181, S190, E266, and Y278.

This sequence belongs to the argininosuccinate synthase family. Type 1 subfamily. Homotetramer.

The protein resides in the cytoplasm. The catalysed reaction is L-citrulline + L-aspartate + ATP = 2-(N(omega)-L-arginino)succinate + AMP + diphosphate + H(+). It participates in amino-acid biosynthesis; L-arginine biosynthesis; L-arginine from L-ornithine and carbamoyl phosphate: step 2/3. The sequence is that of Argininosuccinate synthase from Campylobacter jejuni subsp. jejuni serotype O:23/36 (strain 81-176).